A 137-amino-acid chain; its full sequence is Fibroblast growth factor 2 (137 aa).

Residue Asn-27 coordinates heparin. Tyr-73 bears the Phosphotyrosine; by TEC mark. A Glycyl lysine isopeptide (Lys-Gly) (interchain with G-Cter in SUMO1) cross-link involves residue Lys-86. The tract at residues 119-135 (KRTGQYKLGSKTGPGQK) is heparin-binding.

The protein belongs to the heparin-binding growth factors family. Monomer. Homodimer. Interacts with FGFR1, FGFR2, FGFR3 and FGFR4. Affinity between fibroblast growth factors (FGFs) and their receptors is increased by heparan sulfate glycosaminoglycans that function as coreceptors. Interacts with CSPG4, FGFBP1 and TEC. Found in a complex with FGFBP1, FGF1 and FGF2. Interacts with FGFBP3. Interacts with integrin ITGAV:ITGB3; the interaction is required for FGF2 signaling. Interacts with SNORC (via the extracellular domain). Interacts with glypican GPC3. In terms of processing, phosphorylation at Tyr-73 regulates FGF2 unconventional secretion.

The protein resides in the secreted. It is found in the nucleus. Its function is as follows. Acts as a ligand for FGFR1, FGFR2, FGFR3 and FGFR4. Also acts as an integrin ligand which is required for FGF2 signaling. Binds to integrin ITGAV:ITGB3. Plays an important role in the regulation of cell survival, cell division, cell differentiation and cell migration. Functions as a potent mitogen in vitro. Can induce angiogenesis. Mediates phosphorylation of ERK1/2 and thereby promotes retinal lens fiber differentiation. This is Fibroblast growth factor 2 (FGF2) from Oryctolagus cuniculus (Rabbit).